The primary structure comprises 575 residues: Lysine--tRNA ligase (575 aa).

Residues Glu412 and Glu419 each contribute to the Mg(2+) site.

The protein belongs to the class-II aminoacyl-tRNA synthetase family. Homodimer. Requires Mg(2+) as cofactor.

It localises to the cytoplasm. It carries out the reaction tRNA(Lys) + L-lysine + ATP = L-lysyl-tRNA(Lys) + AMP + diphosphate. The chain is Lysine--tRNA ligase from Bacteroides fragilis (strain YCH46).